A 1035-amino-acid polypeptide reads, in one-letter code: Sulfite reductase [NADPH] flavoprotein component (1035 aa).

Residues 648–879 (VKNFVVKVKE…VKPSVMKLPP (232 aa)) form the FAD-binding FR-type domain. FAD contacts are provided by residues 684 to 695 (YDIGEALGIHAR) and 814 to 824 (LKRREYSIASS).

It depends on FAD as a cofactor. Requires FMN as cofactor.

The enzyme catalyses hydrogen sulfide + 3 NADP(+) + 3 H2O = sulfite + 3 NADPH + 4 H(+). It participates in sulfur metabolism; hydrogen sulfide biosynthesis; hydrogen sulfide from sulfite (NADPH route): step 1/1. This enzyme catalyzes the 6-electron reduction of sulfite to sulfide. This is one of several activities required for the biosynthesis of L-cysteine from sulfate. This is Sulfite reductase [NADPH] flavoprotein component (MET10) from Saccharomyces cerevisiae (strain ATCC 204508 / S288c) (Baker's yeast).